The primary structure comprises 255 residues: tRNA (guanine-N(1)-)-methyltransferase (255 aa).

Residues Gly-121 and 141–146 each bind S-adenosyl-L-methionine; that span reads IGDYVL. Residues 236–255 form a disordered region; it reads PVKAPNRAGRQKTPKNKTDG. Over residues 244–255 the composition is skewed to basic residues; it reads GRQKTPKNKTDG.

This sequence belongs to the RNA methyltransferase TrmD family. In terms of assembly, homodimer.

Its subcellular location is the cytoplasm. The catalysed reaction is guanosine(37) in tRNA + S-adenosyl-L-methionine = N(1)-methylguanosine(37) in tRNA + S-adenosyl-L-homocysteine + H(+). Functionally, specifically methylates guanosine-37 in various tRNAs. This chain is tRNA (guanine-N(1)-)-methyltransferase, found in Bradyrhizobium diazoefficiens (strain JCM 10833 / BCRC 13528 / IAM 13628 / NBRC 14792 / USDA 110).